A 500-amino-acid polypeptide reads, in one-letter code: Transcription termination factor MTERF8, chloroplastic (500 aa).

Residues 1-64 (MVILSLVSCS…NHREPALTFR (64 aa)) constitute a chloroplast transit peptide.

Belongs to the mTERF family.

Its subcellular location is the plastid. It is found in the chloroplast. Transcription termination factor that is transcriptionally active in chloroplasts. The sequence is that of Transcription termination factor MTERF8, chloroplastic from Arabidopsis thaliana (Mouse-ear cress).